We begin with the raw amino-acid sequence, 265 residues long: Hydroxyacylglutathione hydrolase (265 aa).

Residues histidine 53, histidine 55, aspartate 57, histidine 58, histidine 109, aspartate 126, and histidine 164 each coordinate Zn(2+).

This sequence belongs to the metallo-beta-lactamase superfamily. Glyoxalase II family. In terms of assembly, monomer. Requires Zn(2+) as cofactor.

The catalysed reaction is an S-(2-hydroxyacyl)glutathione + H2O = a 2-hydroxy carboxylate + glutathione + H(+). It functions in the pathway secondary metabolite metabolism; methylglyoxal degradation; (R)-lactate from methylglyoxal: step 2/2. Thiolesterase that catalyzes the hydrolysis of S-D-lactoyl-glutathione to form glutathione and D-lactic acid. The protein is Hydroxyacylglutathione hydrolase of Dechloromonas aromatica (strain RCB).